We begin with the raw amino-acid sequence, 369 residues long: MSKPLSDLSAAGVAVWLDDISRERIRTGNLAELARTRSVVGVTSNPTIFQKAIGGGETYNEQLRDLAVRGVDVGEAVRAITAADIRDACDILRPAYDASAGVDGRVSLEVDPRLAHETERTVAEARALWWSVDRPNLFIKIPATKSGLPAITATLAQGISVNVTLIFALDRYEAVMDAFMTGLEQALAAGRDISDVASVASFFVSRVDSEVDGRLAKIGTPKAEALRSKAAIANARLAYELYEKIFSTPRWERLAAAGAKPQRPLWASTSTKDPGLPDTLYVTELIAPGTVNTMPEATLEAFADHGVVPGDTITPNYEDARAVLAELTELGVDMADVVEVLEVEGVRKFEDSWNQLLDTIREQLGSAAS.

The Schiff-base intermediate with substrate role is filled by lysine 140.

This sequence belongs to the transaldolase family. Type 2 subfamily.

It localises to the cytoplasm. It catalyses the reaction D-sedoheptulose 7-phosphate + D-glyceraldehyde 3-phosphate = D-erythrose 4-phosphate + beta-D-fructose 6-phosphate. The protein operates within carbohydrate degradation; pentose phosphate pathway; D-glyceraldehyde 3-phosphate and beta-D-fructose 6-phosphate from D-ribose 5-phosphate and D-xylulose 5-phosphate (non-oxidative stage): step 2/3. Transaldolase is important for the balance of metabolites in the pentose-phosphate pathway. The sequence is that of Transaldolase from Parafrankia sp. (strain EAN1pec).